Reading from the N-terminus, the 356-residue chain is 3-dehydroquinate synthase (356 aa).

NAD(+)-binding positions include 69–74 (DGEQYK), 103–107 (GVVGD), 127–128 (TT), K140, and K149. 3 residues coordinate Zn(2+): E182, H245, and H262.

This sequence belongs to the sugar phosphate cyclases superfamily. Dehydroquinate synthase family. The cofactor is Co(2+). Zn(2+) serves as cofactor. NAD(+) is required as a cofactor.

It is found in the cytoplasm. The catalysed reaction is 7-phospho-2-dehydro-3-deoxy-D-arabino-heptonate = 3-dehydroquinate + phosphate. It participates in metabolic intermediate biosynthesis; chorismate biosynthesis; chorismate from D-erythrose 4-phosphate and phosphoenolpyruvate: step 2/7. Its function is as follows. Catalyzes the conversion of 3-deoxy-D-arabino-heptulosonate 7-phosphate (DAHP) to dehydroquinate (DHQ). The chain is 3-dehydroquinate synthase from Pseudoalteromonas translucida (strain TAC 125).